The sequence spans 134 residues: Small ribosomal subunit protein uS8c (134 aa).

Belongs to the universal ribosomal protein uS8 family. Part of the 30S ribosomal subunit.

The protein localises to the plastid. The protein resides in the chloroplast. In terms of biological role, one of the primary rRNA binding proteins, it binds directly to 16S rRNA central domain where it helps coordinate assembly of the platform of the 30S subunit. This chain is Small ribosomal subunit protein uS8c (rps8), found in Phaseolus vulgaris (Kidney bean).